The sequence spans 159 residues: Protein HydD (159 aa).

This sequence belongs to the peptidase A31 family.

This Wolinella succinogenes (strain ATCC 29543 / DSM 1740 / CCUG 13145 / JCM 31913 / LMG 7466 / NCTC 11488 / FDC 602W) (Vibrio succinogenes) protein is Protein HydD (hydD).